Reading from the N-terminus, the 309-residue chain is Glutaminase (309 aa).

7 residues coordinate substrate: Ser-65, Asn-117, Glu-162, Asn-169, Tyr-193, Tyr-245, and Val-263.

Belongs to the glutaminase family. In terms of assembly, homotetramer.

The catalysed reaction is L-glutamine + H2O = L-glutamate + NH4(+). The protein is Glutaminase of Bacillus cytotoxicus (strain DSM 22905 / CIP 110041 / 391-98 / NVH 391-98).